Consider the following 289-residue polypeptide: Zinc finger matrin-type protein 3 (289 aa).

A disordered region spans residues 1-59 (MILLQHAGLPPPKRPSSSPPMSVAARSTGALQLPPQKPFGQEASLPLAGEEEPPKGGEQ). Over residues 9–18 (LPPPKRPSSS) the composition is skewed to pro residues. Matrin-type zinc fingers lie at residues 70–100 (LYCK…KLRN) and 147–177 (DYCK…RLRL). A compositionally biased stretch (polar residues) spans 180–191 (AQSNSFSDSSEV). The interval 180-200 (AQSNSFSDSSEVGQRRTRKEG) is disordered. The segment at 246-276 (FYCSMCNVGAGEEVEFRQHLESKQHKSKVSE) adopts a Matrin-type 3 zinc-finger fold.

As to quaternary structure, interacts with dsRNA.

The protein localises to the nucleus. It localises to the nucleolus. Its function is as follows. Acts as a bona fide target gene of p53/TP53. May play a role in the TP53-dependent growth regulatory pathway. May contribute to TP53-mediated apoptosis by regulation of TP53 expression and translocation to the nucleus and nucleolus. The protein is Zinc finger matrin-type protein 3 of Bos taurus (Bovine).